The following is a 232-amino-acid chain: Succinyl-CoA:3-ketoacid coenzyme A transferase subunit A (232 aa).

Position 24-30 (24-30 (GGFGLCG)) interacts with CoA.

The protein belongs to the 3-oxoacid CoA-transferase subunit A family. In terms of assembly, heterodimer of a subunit A and a subunit B.

It catalyses the reaction a 3-oxo acid + succinyl-CoA = a 3-oxoacyl-CoA + succinate. In Helicobacter pylori (strain ATCC 700392 / 26695) (Campylobacter pylori), this protein is Succinyl-CoA:3-ketoacid coenzyme A transferase subunit A (scoA).